Here is a 431-residue protein sequence, read N- to C-terminus: Glutamate-1-semialdehyde 2,1-aminomutase (431 aa).

Lys-265 bears the N6-(pyridoxal phosphate)lysine mark.

The protein belongs to the class-III pyridoxal-phosphate-dependent aminotransferase family. HemL subfamily. As to quaternary structure, homodimer. Pyridoxal 5'-phosphate is required as a cofactor.

The protein localises to the cytoplasm. The enzyme catalyses (S)-4-amino-5-oxopentanoate = 5-aminolevulinate. The protein operates within porphyrin-containing compound metabolism; protoporphyrin-IX biosynthesis; 5-aminolevulinate from L-glutamyl-tRNA(Glu): step 2/2. The protein is Glutamate-1-semialdehyde 2,1-aminomutase of Aliivibrio fischeri (strain MJ11) (Vibrio fischeri).